The chain runs to 473 residues: Membrane-bound acylglycerophosphatidylinositol O-acyltransferase MBOAT7 (473 aa).

Residues 1–5 (MTPEE) are Cytoplasmic-facing. A helical membrane pass occupies residues 6–22 (WTYLMVLLISIPVGFLF). Over 23–33 (KKAGPGLKRWG) the chain is Lumenal. The helical transmembrane segment at 34-57 (AAAVGLGLTLFTCGPHSLHSLITI) threads the bilayer. The Cytoplasmic segment spans residues 58 to 73 (LGTWALIQAQPCSCHA). A helical transmembrane segment spans residues 74–93 (LALAWTFSYLLFFRALSLLG). Over 94–194 (LPTPTPFTNA…VPSLRPLLRR (101 aa)) the chain is Lumenal. A helical membrane pass occupies residues 195–212 (AWPAPLFGLLFLLSSHLF). Residues 213 to 231 (PLEAVREDAFYARPLPTRL) are Cytoplasmic-facing. A helical membrane pass occupies residues 232–261 (FYMIPVFFAFRMRFYVAWIAAECGCIAAGF). Topologically, residues 262–426 (GAYPVAAKAR…LSMADTLRYW (165 aa)) are lumenal. Asn321 carries N-linked (GlcNAc...) asparagine glycosylation. Residues 427–447 (ASIYFWVHFLALACLGLGLVL) traverse the membrane as a helical segment. Over 448–473 (GGGSPSKRKTPSQATSSQAKEKLREE) the chain is Cytoplasmic. The interval 451–473 (SPSKRKTPSQATSSQAKEKLREE) is disordered.

Belongs to the membrane-bound acyltransferase family. As to quaternary structure, interacts with SPTSSA; the interaction facilitates MBOAT7 location to mitochondria-associated membranes (MAMs).

The protein resides in the endoplasmic reticulum membrane. The enzyme catalyses a 1-acyl-sn-glycero-3-phospho-(1D-myo-inositol) + an acyl-CoA = a 1,2-diacyl-sn-glycero-3-phospho-(1D-myo-inositol) + CoA. It carries out the reaction 1-octadecanoyl-sn-glycero-3-phospho-(1D-myo-inositol) + (5Z,8Z,11Z,14Z)-eicosatetraenoyl-CoA = 1-octadecanoyl-2-(5Z,8Z,11Z,14Z-eicosatetraenoyl)-sn-glycero-3-phospho-(1D-myo-inositol) + CoA. It catalyses the reaction a 1-acyl-sn-glycero-3-phospho-(1D-myo-inositol) + (5Z,8Z,11Z,14Z)-eicosatetraenoyl-CoA = a 1-acyl-2-(5Z,8Z,11Z,14Z-eicosatetraenoyl)-sn-glycero-3-phospho-(1D-myo-inositol) + CoA. The catalysed reaction is (5Z,8Z,11Z,14Z)-eicosatetraenoyl-CoA + 1-hexadecanoyl-sn-glycero-3-phosphocholine = 1-hexadecanoyl-2-(5Z,8Z,11Z,14Z-eicosatetraenoyl)-sn-glycero-3-phosphocholine + CoA. It functions in the pathway lipid metabolism; phospholipid metabolism. In terms of biological role, acyltransferase which catalyzes the transfer of an acyl group from an acyl-CoA to a lysophosphatidylinositol (1-acylglycerophosphatidylinositol or LPI) leading to the production of a phosphatidylinositol (1,2-diacyl-sn-glycero-3-phosphoinositol or PI) and participates in the reacylation step of the phospholipid remodeling pathway also known as the Lands cycle. Prefers arachidonoyl-CoA as the acyl donor, thus contributing to the regulation of free levels arachidonic acid in cell. In liver, participates in the regulation of triglyceride metabolism through the phosphatidylinositol acyl-chain remodeling regulation. This Mus musculus (Mouse) protein is Membrane-bound acylglycerophosphatidylinositol O-acyltransferase MBOAT7.